The primary structure comprises 235 residues: Phosphoribosylaminoimidazole-succinocarboxamide synthase (235 aa).

Belongs to the SAICAR synthetase family.

It catalyses the reaction 5-amino-1-(5-phospho-D-ribosyl)imidazole-4-carboxylate + L-aspartate + ATP = (2S)-2-[5-amino-1-(5-phospho-beta-D-ribosyl)imidazole-4-carboxamido]succinate + ADP + phosphate + 2 H(+). It functions in the pathway purine metabolism; IMP biosynthesis via de novo pathway; 5-amino-1-(5-phospho-D-ribosyl)imidazole-4-carboxamide from 5-amino-1-(5-phospho-D-ribosyl)imidazole-4-carboxylate: step 1/2. The chain is Phosphoribosylaminoimidazole-succinocarboxamide synthase from Thermococcus kodakarensis (strain ATCC BAA-918 / JCM 12380 / KOD1) (Pyrococcus kodakaraensis (strain KOD1)).